The following is a 200-amino-acid chain: NAD(P)H dehydrogenase (quinone) (200 aa).

The Flavodoxin-like domain occupies 7–199 (LAIVFYSSTG…RQVELTAKLL (193 aa)). FMN is bound by residues 13-18 (SSTGTG), 86-88 (TRF), 121-127 (SAQNVNG), and His142.

The protein belongs to the WrbA family. Homotetramer. Requires FMN as cofactor.

The catalysed reaction is a quinone + NADH + H(+) = a quinol + NAD(+). It carries out the reaction a quinone + NADPH + H(+) = a quinol + NADP(+). This Deinococcus radiodurans (strain ATCC 13939 / DSM 20539 / JCM 16871 / CCUG 27074 / LMG 4051 / NBRC 15346 / NCIMB 9279 / VKM B-1422 / R1) protein is NAD(P)H dehydrogenase (quinone).